The chain runs to 150 residues: Large ribosomal subunit protein uL15 (150 aa).

The interval 1-49 (MELHQLKSVSKSRNHKSKVVGRGHGSGLGKTSSRGQKGQKARKSGLTRL) is disordered. Over residues 10-21 (SKSRNHKSKVVG) the composition is skewed to basic residues.

It belongs to the universal ribosomal protein uL15 family. In terms of assembly, part of the 50S ribosomal subunit.

In terms of biological role, binds to the 23S rRNA. This Mycoplasma genitalium (strain ATCC 33530 / DSM 19775 / NCTC 10195 / G37) (Mycoplasmoides genitalium) protein is Large ribosomal subunit protein uL15.